Reading from the N-terminus, the 167-residue chain is Crossover junction endodeoxyribonuclease RuvC (167 aa).

Residues D11, E71, and D143 contribute to the active site. Residues D11, E71, and D143 each contribute to the Mg(2+) site.

This sequence belongs to the RuvC family. Homodimer which binds Holliday junction (HJ) DNA. The HJ becomes 2-fold symmetrical on binding to RuvC with unstacked arms; it has a different conformation from HJ DNA in complex with RuvA. In the full resolvosome a probable DNA-RuvA(4)-RuvB(12)-RuvC(2) complex forms which resolves the HJ. It depends on Mg(2+) as a cofactor.

The protein resides in the cytoplasm. The catalysed reaction is Endonucleolytic cleavage at a junction such as a reciprocal single-stranded crossover between two homologous DNA duplexes (Holliday junction).. Functionally, the RuvA-RuvB-RuvC complex processes Holliday junction (HJ) DNA during genetic recombination and DNA repair. Endonuclease that resolves HJ intermediates. Cleaves cruciform DNA by making single-stranded nicks across the HJ at symmetrical positions within the homologous arms, yielding a 5'-phosphate and a 3'-hydroxyl group; requires a central core of homology in the junction. The consensus cleavage sequence is 5'-(A/T)TT(C/G)-3'. Cleavage occurs on the 3'-side of the TT dinucleotide at the point of strand exchange. HJ branch migration catalyzed by RuvA-RuvB allows RuvC to scan DNA until it finds its consensus sequence, where it cleaves and resolves the cruciform DNA. The chain is Crossover junction endodeoxyribonuclease RuvC from Bartonella bacilliformis (strain ATCC 35685 / KC583 / Herrer 020/F12,63).